Consider the following 460-residue polypeptide: Serine hydroxymethyltransferase, cytosolic (460 aa).

K244 is modified (N6-(pyridoxal phosphate)lysine).

This sequence belongs to the SHMT family. In terms of assembly, homotetramer. Pyridoxal 5'-phosphate is required as a cofactor.

It is found in the cytoplasm. The enzyme catalyses (6R)-5,10-methylene-5,6,7,8-tetrahydrofolate + glycine + H2O = (6S)-5,6,7,8-tetrahydrofolate + L-serine. It participates in one-carbon metabolism; tetrahydrofolate interconversion. Functionally, interconversion of serine and glycine. The sequence is that of Serine hydroxymethyltransferase, cytosolic (SHMT-1) from Encephalitozoon cuniculi (strain GB-M1) (Microsporidian parasite).